The primary structure comprises 170 residues: Acetyl-CoA decarbonylase/synthase complex subunit epsilon 1 (170 aa).

This sequence belongs to the CdhB family. Heterotetramer of two alpha and two epsilon subunits. The ACDS complex is made up of alpha, epsilon, beta, gamma and delta subunits with a probable stoichiometry of (alpha(2)epsilon(2))(4)-beta(8)-(gamma(1)delta(1))(8).

The protein operates within one-carbon metabolism; methanogenesis from acetate. Its function is as follows. Part of a complex that catalyzes the reversible cleavage of acetyl-CoA, allowing growth on acetate as sole source of carbon and energy. The alpha-epsilon subcomponent functions as a carbon monoxide dehydrogenase. The precise role of the epsilon subunit is unclear; it may have a stabilizing role within the alpha(2)epsilon(2) component and/or be involved in electron transfer to FAD during a potential FAD-mediated CO oxidation. This Methanosarcina mazei (strain ATCC BAA-159 / DSM 3647 / Goe1 / Go1 / JCM 11833 / OCM 88) (Methanosarcina frisia) protein is Acetyl-CoA decarbonylase/synthase complex subunit epsilon 1 (cdhB1).